Here is a 258-residue protein sequence, read N- to C-terminus: Regulatory protein RecX (258 aa).

This sequence belongs to the RecX family.

The protein localises to the cytoplasm. In terms of biological role, modulates RecA activity. In Streptococcus pneumoniae (strain JJA), this protein is Regulatory protein RecX.